A 206-amino-acid chain; its full sequence is Protein phosphatase inhibitor 2 (206 aa).

Positions 1–36 (MAASTASHRPIKGILKNKTSAASPPVVPSAEQPRPI) are disordered. An N-acetylalanine modification is found at alanine 2. The segment at 12-17 (KGILKN) is required for binding PPP1CC. Positions 44–56 (KSQKWDEMNILAT) are required for binding the 'RVXF' binding groove of PPP1CC. Serine 45 bears the Phosphoserine; by ATM mark. Residue threonine 74 is modified to Phosphothreonine. Residues 75–143 (PYHNMIGDDE…EREKKRQFEM (69 aa)) are disordered. The span at 81–92 (GDDEDAYSDSEG) shows a compositional bias: acidic residues. Phosphoserine occurs at positions 88 and 90. Phosphothreonine is present on residues threonine 97 and threonine 117. A compositionally biased stretch (basic and acidic residues) spans 111–121 (SEPKYRTREQE). Phosphoserine is present on residues serine 122, serine 123, and serine 131. The segment covering 122-131 (SSGEEDNDLS) has biased composition (acidic residues). Residues 132–143 (PEEREKKRQFEM) are compositionally biased toward basic and acidic residues. The segment at 148–151 (HYNE) is required for binding PPP1CC catalytic center, displacing metal ions and inhibition of PPP1CC catalytic activity. The interval 164-206 (KDLHDDDEDEEMAETADGDSMNVEESSQGSTTSDHLQHKSQSS) is disordered. A compositionally biased stretch (acidic residues) spans 168-180 (DDDEDEEMAETAD). The span at 186-206 (VEESSQGSTTSDHLQHKSQSS) shows a compositional bias: polar residues.

The protein belongs to the protein phosphatase inhibitor 2 family. Heterodimer with PP1. In terms of processing, phosphorylation on Ser-45 by ATM activates PP1 by dissociating the PP1-PPP1R2 complex. Phosphorylation on Thr-74 by GSK3 activates PP1 by dissociating the PP1-PPP1R2 complex.

Its function is as follows. Inhibitor of protein-phosphatase 1. The protein is Protein phosphatase inhibitor 2 (Ppp1r2) of Mus musculus (Mouse).